A 1745-amino-acid polypeptide reads, in one-letter code: ADAMTS-like protein 1 (1745 aa).

A signal peptide spans 1–28 (MECCRRAAPGTPLLVLAFLLLSSRTARS). The 50-residue stretch at 33–82 (EGLWDAWGPWSECSRTCGGGASYSLRRCLSSKSCEGRNIRYRTCSNVDCP) folds into the TSP type-1 1 domain. Disulfide bonds link cysteine 45/cysteine 76, cysteine 49/cysteine 81, and cysteine 60/cysteine 66. Asparagine 251 carries an N-linked (GlcNAc...) asparagine glycan. 2 O-linked (Fuc...) serine glycosylation sites follow: serine 310 and serine 391. TSP type-1 domains are found at residues 376 to 424 (PLPR…MYTP), 436 to 493 (DCPK…TPCY), 522 to 584 (EEPS…GPCN), 607 to 667 (ELYD…DPCP), 703 to 762 (CPPA…KKDD), and 763 to 825 (CPSE…ATCA). An O-linked (Fuc...) threonine glycan is attached at threonine 451. 3 disulfides stabilise this stretch: cysteine 534/cysteine 578, cysteine 538/cysteine 583, and cysteine 549/cysteine 567. Intrachain disulfides connect cysteine 775/cysteine 819, cysteine 779/cysteine 824, cysteine 790/cysteine 807, and cysteine 874/cysteine 922. Residues 836–938 (PHIAAARNIY…EQFVIKLIGG (103 aa)) form the Ig-like C2-type 1 domain. Disordered regions lie at residues 966–991 (EALQ…GLTA) and 1114–1137 (VSGF…RPHR). Positions 1115-1126 (SGFSSSLRSSSG) are enriched in low complexity. Ig-like C2-type domains are found at residues 1139–1241 (PAIL…IAVT), 1261–1352 (PTVT…TQLL), and 1378–1468 (PSVL…ASLV). 3 disulfides stabilise this stretch: cysteine 1177/cysteine 1225, cysteine 1283/cysteine 1336, and cysteine 1401/cysteine 1452. 2 TSP type-1 domains span residues 1528–1591 (CPSR…QLCV) and 1649–1709 (CSVH…TPCE). The 37-residue stretch at 1709–1745 (ENTECRDTTRYCEKVRQLKLCQLGQFRSRCCGTCGKA) folds into the PLAC domain.

In terms of assembly, monomer. Post-translationally, glycosylated. O-fucosylated by POFUT2 on a serine or a threonine residue found within the consensus sequence C1-X(2)-(S/T)-C2-G of the TSP type-1 repeat domains where C1 and C2 are the first and second cysteine residue of the repeat, respectively. Fucosylated repeats can then be further glycosylated by the addition of a beta-1,3-glucose residue by the glucosyltransferase, B3GALTL. Fucosylation mediates the efficient secretion of ADAMTS family members. Can also be C-glycosylated with one or two mannose molecules on tryptophan residues within the consensus sequence W-X-X-W of the TPRs, and N-glycosylated. These other glycosylations can also facilitate secretion. Disulfide bonds are present.

It localises to the secreted. It is found in the extracellular space. Its subcellular location is the extracellular matrix. The chain is ADAMTS-like protein 1 (Adamtsl1) from Mus musculus (Mouse).